A 308-amino-acid polypeptide reads, in one-letter code: 4-hydroxy-3-methylbut-2-enyl diphosphate reductase 2 (308 aa).

C12 is a [4Fe-4S] cluster binding site. (2E)-4-hydroxy-3-methylbut-2-enyl diphosphate contacts are provided by H41 and H74. 2 residues coordinate dimethylallyl diphosphate: H41 and H74. Isopentenyl diphosphate is bound by residues H41 and H74. Position 96 (C96) interacts with [4Fe-4S] cluster. Residue H124 participates in (2E)-4-hydroxy-3-methylbut-2-enyl diphosphate binding. H124 contributes to the dimethylallyl diphosphate binding site. H124 serves as a coordination point for isopentenyl diphosphate. Residue E126 is the Proton donor of the active site. T164 provides a ligand contact to (2E)-4-hydroxy-3-methylbut-2-enyl diphosphate. C194 is a [4Fe-4S] cluster binding site. (2E)-4-hydroxy-3-methylbut-2-enyl diphosphate contacts are provided by S222, S223, N224, and S266. Dimethylallyl diphosphate-binding residues include S222, S223, N224, and S266. S222, S223, N224, and S266 together coordinate isopentenyl diphosphate.

The protein belongs to the IspH family. [4Fe-4S] cluster is required as a cofactor.

The enzyme catalyses isopentenyl diphosphate + 2 oxidized [2Fe-2S]-[ferredoxin] + H2O = (2E)-4-hydroxy-3-methylbut-2-enyl diphosphate + 2 reduced [2Fe-2S]-[ferredoxin] + 2 H(+). The catalysed reaction is dimethylallyl diphosphate + 2 oxidized [2Fe-2S]-[ferredoxin] + H2O = (2E)-4-hydroxy-3-methylbut-2-enyl diphosphate + 2 reduced [2Fe-2S]-[ferredoxin] + 2 H(+). It functions in the pathway isoprenoid biosynthesis; dimethylallyl diphosphate biosynthesis; dimethylallyl diphosphate from (2E)-4-hydroxy-3-methylbutenyl diphosphate: step 1/1. The protein operates within isoprenoid biosynthesis; isopentenyl diphosphate biosynthesis via DXP pathway; isopentenyl diphosphate from 1-deoxy-D-xylulose 5-phosphate: step 6/6. Functionally, catalyzes the conversion of 1-hydroxy-2-methyl-2-(E)-butenyl 4-diphosphate (HMBPP) into a mixture of isopentenyl diphosphate (IPP) and dimethylallyl diphosphate (DMAPP). Acts in the terminal step of the DOXP/MEP pathway for isoprenoid precursor biosynthesis. The chain is 4-hydroxy-3-methylbut-2-enyl diphosphate reductase 2 from Bradyrhizobium diazoefficiens (strain JCM 10833 / BCRC 13528 / IAM 13628 / NBRC 14792 / USDA 110).